Reading from the N-terminus, the 354-residue chain is MKKIIFTGGGSAGHVTPNLAIINELNDKDWSIAYIGSYEGIERQLVEKAGIRYFGISSGKLRRYMDWKNVTDIARIANGFRQARKILKAEKPDVVFSKGGFVTVPVVAAAYTLRIPVHLHESDLTPGLANRLAKRFANTFYTSFAETAAHFPKEATTTVGSPIRRELLEGSRIQGLTITDFSRERPTLLVMGGSLGAKRINEAIRESLDTLTNTYQIIHICGKGHLDPALEGRRNYKQYEYVHDELPHFLQAADLVVTRGGSNAIFEFLALHIPMLIIPLSRAQSRGDQILNAQTFVKNGYARMLEEENLTKETLQQEVQELYNGRQTYIEAMNASQATNAVAYITEKLEQEVQ.

Residues 11–13 (SAG), Arg-164, Ser-194, and Gln-289 each bind UDP-N-acetyl-alpha-D-glucosamine.

It belongs to the glycosyltransferase 28 family. MurG subfamily.

It localises to the cell membrane. The enzyme catalyses di-trans,octa-cis-undecaprenyl diphospho-N-acetyl-alpha-D-muramoyl-L-alanyl-D-glutamyl-meso-2,6-diaminopimeloyl-D-alanyl-D-alanine + UDP-N-acetyl-alpha-D-glucosamine = di-trans,octa-cis-undecaprenyl diphospho-[N-acetyl-alpha-D-glucosaminyl-(1-&gt;4)]-N-acetyl-alpha-D-muramoyl-L-alanyl-D-glutamyl-meso-2,6-diaminopimeloyl-D-alanyl-D-alanine + UDP + H(+). The protein operates within cell wall biogenesis; peptidoglycan biosynthesis. In terms of biological role, cell wall formation. Catalyzes the transfer of a GlcNAc subunit on undecaprenyl-pyrophosphoryl-MurNAc-pentapeptide (lipid intermediate I) to form undecaprenyl-pyrophosphoryl-MurNAc-(pentapeptide)GlcNAc (lipid intermediate II). In Shouchella clausii (strain KSM-K16) (Alkalihalobacillus clausii), this protein is UDP-N-acetylglucosamine--N-acetylmuramyl-(pentapeptide) pyrophosphoryl-undecaprenol N-acetylglucosamine transferase.